Here is a 91-residue protein sequence, read N- to C-terminus: uncharacterized protein (91 aa).

3 consecutive transmembrane segments (helical) span residues 4–21 (YAII…LRRG), 28–50 (IIEV…SHAV), and 60–82 (VKAF…GTYL).

It localises to the cell membrane. This is an uncharacterized protein from Archaeoglobus fulgidus (strain ATCC 49558 / DSM 4304 / JCM 9628 / NBRC 100126 / VC-16).